The chain runs to 109 residues: Profilin (109 aa).

It belongs to the profilin family. Multimer. Occurs in many kinds of cells as a complex with monomeric actin in a 1:1 ratio.

It is found in the cytoplasm. Its subcellular location is the cytoskeleton. Functionally, binds to actin and affects the structure of the cytoskeleton. At high concentrations, profilin prevents the polymerization of actin, whereas it enhances it at low concentrations. By binding to PIP2, it inhibits the formation of IP3 and DG. The protein is Profilin of Actinidia deliciosa (Kiwi).